Consider the following 104-residue polypeptide: Met repressor (104 aa).

The protein belongs to the MetJ family. In terms of assembly, homodimer.

The protein localises to the cytoplasm. Functionally, this regulatory protein, when combined with SAM (S-adenosylmethionine) represses the expression of the methionine regulon and of enzymes involved in SAM synthesis. This chain is Met repressor, found in Shewanella oneidensis (strain ATCC 700550 / JCM 31522 / CIP 106686 / LMG 19005 / NCIMB 14063 / MR-1).